The primary structure comprises 231 residues: Flagellar L-ring protein (231 aa).

A signal peptide spans M1–G20. A lipid anchor (N-palmitoyl cysteine) is attached at C21. A lipid anchor (S-diacylglycerol cysteine) is attached at C21.

It belongs to the FlgH family. As to quaternary structure, the basal body constitutes a major portion of the flagellar organelle and consists of four rings (L,P,S, and M) mounted on a central rod.

Its subcellular location is the cell outer membrane. It is found in the bacterial flagellum basal body. Its function is as follows. Assembles around the rod to form the L-ring and probably protects the motor/basal body from shearing forces during rotation. The chain is Flagellar L-ring protein from Desulfotalea psychrophila (strain LSv54 / DSM 12343).